A 411-amino-acid polypeptide reads, in one-letter code: NADH-quinone oxidoreductase subunit D (411 aa).

This sequence belongs to the complex I 49 kDa subunit family. NDH-1 is composed of 14 different subunits. Subunits NuoB, C, D, E, F, and G constitute the peripheral sector of the complex.

It localises to the cell inner membrane. The catalysed reaction is a quinone + NADH + 5 H(+)(in) = a quinol + NAD(+) + 4 H(+)(out). Functionally, NDH-1 shuttles electrons from NADH, via FMN and iron-sulfur (Fe-S) centers, to quinones in the respiratory chain. The immediate electron acceptor for the enzyme in this species is believed to be ubiquinone. Couples the redox reaction to proton translocation (for every two electrons transferred, four hydrogen ions are translocated across the cytoplasmic membrane), and thus conserves the redox energy in a proton gradient. The protein is NADH-quinone oxidoreductase subunit D of Phenylobacterium zucineum (strain HLK1).